Consider the following 864-residue polypeptide: Protein translocase subunit SecA (864 aa).

ATP is bound by residues Q85, 103 to 107 (GEGKT), and D542.

It belongs to the SecA family. Monomer and homodimer. Part of the essential Sec protein translocation apparatus which comprises SecA, SecYEG and auxiliary proteins SecDF. Other proteins may also be involved.

It is found in the cell inner membrane. The protein localises to the cytoplasm. The enzyme catalyses ATP + H2O + cellular proteinSide 1 = ADP + phosphate + cellular proteinSide 2.. Functionally, part of the Sec protein translocase complex. Interacts with the SecYEG preprotein conducting channel. Has a central role in coupling the hydrolysis of ATP to the transfer of proteins into and across the cell membrane, serving as an ATP-driven molecular motor driving the stepwise translocation of polypeptide chains across the membrane. The protein is Protein translocase subunit SecA of Fervidobacterium nodosum (strain ATCC 35602 / DSM 5306 / Rt17-B1).